The chain runs to 324 residues: Fibronectin type III domain-containing protein 8 (324 aa).

The region spanning 179–280 (PDTPFIFEHT…KPYKFATLAT (102 aa)) is the Fibronectin type-III domain.

The protein is Fibronectin type III domain-containing protein 8 (FNDC8) of Macaca fascicularis (Crab-eating macaque).